Reading from the N-terminus, the 428-residue chain is MGGLFSRWRTKLSTVEVLESIDKEIQALEEFREKNQRLQKLRVGRLILYSSVLYLFTCLIVYLWYLPDEFTARLAMTLPFFAFPLIIWSIRTVIIFFFSKRTERNNEALDDLKSQRKKILEEVMEKETYKTAKLILERFDPDSKKAKECEPPSAGGAVTARPGQEIRQRTAAQRNLSPTPASPNQGPPPQVPVSPGPPKDSSAPGGPPERTVTPALSSNVLPRHLGSPATSVPGMGLHPPGPPLARPILPRERGALDRIVEYLVGDGPQNRYALICQQCFSHNGMALKEEFEYIAFRCAYCFFLNPARKTRPQAPRLPEFSFEKRQVVEGSSSVGPLPSGSVLSSDNQFNEESLEQDVLDNNTEQTDDKIPATEQTNQVIEKASDSEEPEEKQETENEEASVIETNSTVPGADSIPDPELNGESLTAE.

Residue Gly-2 is the site of N-myristoyl glycine attachment. Topologically, residues Gly-2–Arg-45 are cytoplasmic. A coiled-coil region spans residues Glu-16 to Val-43. A helical transmembrane segment spans residues Leu-46–Leu-66. The Lumenal portion of the chain corresponds to Pro-67–Thr-77. Residues Leu-78–Phe-98 traverse the membrane as a helical segment. Over Ser-99 to Glu-428 the chain is Cytoplasmic. The stretch at Thr-102 to Thr-128 forms a coiled coil. Phosphoserine is present on residues Ser-114, Ser-153, Ser-177, Ser-182, and Ser-194. Residues Ser-143 to Ile-248 are disordered. Pro residues predominate over residues Gln-185–Pro-198. Residues Thr-211 and Thr-213 each carry the phosphothreonine modification. Phosphoserine is present on residues Ser-217 and Ser-227. The C4-type; plays a role in ER morphology zinc-finger motif lies at Cys-276–Cys-301. 3 positions are modified to phosphoserine: Ser-321, Ser-353, and Ser-384. The disordered stretch occupies residues Asn-361–Glu-428. Residues Ser-386–Ser-401 show a composition bias toward acidic residues. Ser-414 is modified (phosphoserine).

The protein belongs to the lunapark family. In terms of assembly, homodimer; homodimerization requires the C4-type zinc finger motif and decreases during mitosis in a phosphorylation-dependent manner. Post-translationally, myristoylated; myristoylation is necessary for the endoplasmic reticulum (ER) three-way ER tubular junction formation, but is not required neither for membrane translocation, membrane topology formation, nor for the specific localization to ER membranes. Phosphorylated. Phosphorylation occurs at Ser-177, Ser-182, Ser-217, Ser-227, Ser-321 and Ser-384 during interphase. Phosphorylation occurs at Ser-114, Ser-153, Ser-194, Thr-211 and Ser-353 during mitosis; these phosphorylations reduce both its homodimerization and the ER three-way tubular junction formation. In terms of processing, subject to proteasomal degradation following phosphorylation during mitosis.

It is found in the endoplasmic reticulum membrane. Its function is as follows. Endoplasmic reticulum (ER)-shaping membrane protein that plays a role in determining ER morphology. Involved in the stabilization of nascent three-way ER tubular junctions within the ER network. May also play a role as a curvature-stabilizing protein within three-way ER tubular junction network. May be involved in limb and central nervous system development. This is Endoplasmic reticulum junction formation protein lunapark from Pongo abelii (Sumatran orangutan).